Reading from the N-terminus, the 402-residue chain is 1-deoxy-D-xylulose 5-phosphate reductoisomerase (402 aa).

Residues Thr10, Gly11, Ser12, Ile13, Asn38, and Asn124 each contribute to the NADPH site. Lys125 serves as a coordination point for 1-deoxy-D-xylulose 5-phosphate. Glu126 contacts NADPH. Asp150 is a Mn(2+) binding site. Residues Ser151, Glu152, Ser186, and His209 each contribute to the 1-deoxy-D-xylulose 5-phosphate site. Glu152 contributes to the Mn(2+) binding site. An NADPH-binding site is contributed by Gly215. Positions 222, 227, 228, and 231 each coordinate 1-deoxy-D-xylulose 5-phosphate. Glu231 contributes to the Mn(2+) binding site.

It belongs to the DXR family. Mg(2+) serves as cofactor. Mn(2+) is required as a cofactor.

The enzyme catalyses 2-C-methyl-D-erythritol 4-phosphate + NADP(+) = 1-deoxy-D-xylulose 5-phosphate + NADPH + H(+). Its pathway is isoprenoid biosynthesis; isopentenyl diphosphate biosynthesis via DXP pathway; isopentenyl diphosphate from 1-deoxy-D-xylulose 5-phosphate: step 1/6. Catalyzes the NADPH-dependent rearrangement and reduction of 1-deoxy-D-xylulose-5-phosphate (DXP) to 2-C-methyl-D-erythritol 4-phosphate (MEP). This is 1-deoxy-D-xylulose 5-phosphate reductoisomerase from Vibrio vulnificus (strain CMCP6).